The following is a 277-amino-acid chain: Putative phosphoenolpyruvate synthase regulatory protein (277 aa).

ADP is bound at residue 157–164; the sequence is GVSRSGKT.

The protein belongs to the pyruvate, phosphate/water dikinase regulatory protein family. PSRP subfamily.

The catalysed reaction is [pyruvate, water dikinase] + ADP = [pyruvate, water dikinase]-phosphate + AMP + H(+). The enzyme catalyses [pyruvate, water dikinase]-phosphate + phosphate + H(+) = [pyruvate, water dikinase] + diphosphate. Bifunctional serine/threonine kinase and phosphorylase involved in the regulation of the phosphoenolpyruvate synthase (PEPS) by catalyzing its phosphorylation/dephosphorylation. This chain is Putative phosphoenolpyruvate synthase regulatory protein, found in Azoarcus sp. (strain BH72).